Reading from the N-terminus, the 532-residue chain is Zinc metalloproteinase nas-29 (532 aa).

The N-terminal stretch at 1–22 is a signal peptide; that stretch reads MISKNTSFCGFLILVLATCMSA. N-linked (GlcNAc...) asparagine glycans are attached at residues Asn-5, Asn-27, Asn-70, and Asn-106. A propeptide spanning residues 23–134 is cleaved from the precursor; that stretch reads QFVSNESIKL…NGESTDRTKR (112 aa). A Peptidase M12A domain is found at 135–335; it reads QAYLDNNYPA…HIMNQHYQCQ (201 aa). 6 disulfides stabilise this stretch: Cys-179/Cys-334, Cys-201/Cys-222, Cys-338/Cys-358, Cys-360/Cys-369, Cys-380/Cys-408, and Cys-435/Cys-456. His-230 is a binding site for Zn(2+). Glu-231 is a catalytic residue. Residues His-234 and His-240 each contribute to the Zn(2+) site. Residues 330 to 370 form the EGF-like domain; sequence QHYQCQEKCPTQAPCQNGGFTNSRNCKVCKCPTGFGGAYCQ. The CUB domain occupies 380–494; the sequence is CGGYLNAEET…VSFEYSFVST (115 aa). Asn-503 carries N-linked (GlcNAc...) asparagine glycosylation.

Requires Zn(2+) as cofactor.

Its subcellular location is the secreted. Functionally, metalloprotease. This is Zinc metalloproteinase nas-29 (nas-29) from Caenorhabditis elegans.